The primary structure comprises 140 residues: Cysteine proteinase inhibitor 1 (140 aa).

Positions 1 to 26 are cleaved as a signal peptide; it reads MRKYRVAGLVAALLVLHSLATPSAQA. The Cystatin domain occupies 48–135; the sequence is GGVEPVGNEN…KELQEFKPVD (88 aa). A Secondary area of contact motif is present at residues 91–95; that stretch reads QVVAG.

Belongs to the cystatin family. Phytocystatin subfamily.

The protein localises to the secreted. In terms of biological role, there are two distinct cystatins in rice seeds (Oryzacystatin-1 and -2) with different specificities against cysteine proteinases. May be involved in the control of germination by inhibition of endogenous cysteine proteinases. May play a role in defense by inhibiting exogenous proteases such as those present in digestive tracks of insects and nematodes. The protein is Cysteine proteinase inhibitor 1 of Oryza sativa subsp. japonica (Rice).